Consider the following 265-residue polypeptide: Polyprenol monophosphomannose synthase (265 aa).

Residues 1 to 10 are compositionally biased toward basic and acidic residues; the sequence is MSVPGEREQG. The tract at residues 1–21 is disordered; that stretch reads MSVPGEREQGAGEDPATVRPT.

The protein belongs to the glycosyltransferase 2 family. Interacts with Lnt (also called Ppm2, AC A0QZ13) upon coexpression in E.coli, which increases the PPM synthase activity of this protein.

The protein resides in the cytoplasm. The enzyme catalyses a di-trans,poly-cis-dolichyl phosphate + GDP-alpha-D-mannose = a di-trans,poly-cis-dolichyl beta-D-mannosyl phosphate + GDP. Transfers mannose from GDP-mannose to lipid acceptors to form polyprenol monophosphomannose (PPM); catalytic activity in vitro is enhanced by Lnt (AC A0QZ13). PMM is an alkai-stable sugar donor which adds mannose-phosphate residues to triacylated-PIM2, eventually leading to generation of the cell wall glycolipid lipoglycan modulins lipoarabinomannan (LAM) and lipomannan (LM). In Mycolicibacterium smegmatis (strain ATCC 700084 / mc(2)155) (Mycobacterium smegmatis), this protein is Polyprenol monophosphomannose synthase.